A 103-amino-acid polypeptide reads, in one-letter code: Co-chaperonin GroES (103 aa).

Belongs to the GroES chaperonin family. As to quaternary structure, heptamer of 7 subunits arranged in a ring. Interacts with the chaperonin GroEL.

The protein resides in the cytoplasm. Together with the chaperonin GroEL, plays an essential role in assisting protein folding. The GroEL-GroES system forms a nano-cage that allows encapsulation of the non-native substrate proteins and provides a physical environment optimized to promote and accelerate protein folding. GroES binds to the apical surface of the GroEL ring, thereby capping the opening of the GroEL channel. This chain is Co-chaperonin GroES, found in Thermosynechococcus vestitus (strain NIES-2133 / IAM M-273 / BP-1).